Here is a 62-residue protein sequence, read N- to C-terminus: Disintegrin schistatin-like subunit A (62 aa).

One can recognise a Disintegrin domain in the interval 1–62 (SVNPCCDPVI…TTDCPRNRYN (62 aa)). 4 cysteine pairs are disulfide-bonded: Cys5/Cys28, Cys19/Cys25, Cys24/Cys49, and Cys37/Cys56. The Cell attachment site motif lies at 41–43 (RGD).

This sequence belongs to the disintegrin family. Dimeric disintegrin subfamily. Heterodimer with subunit B; disulfide-linked. Expressed by the venom gland.

It localises to the secreted. May bind to both alpha-IIb/beta-3 (ITGA2B/ITGB3) and alpha-V/beta-3 (ITGAV/ITGB3) integrins, and may inhibit platelet aggregation. This chain is Disintegrin schistatin-like subunit A, found in Echis carinatus (Saw-scaled viper).